Consider the following 539-residue polypeptide: MKLLAVRRLFRIQRVVIRYRLDDLLFALPLPWWMLAVRFVLPWRWLPRRKSELSRGVRFRLALQDLGPIFIKFGQLLSTRRDLLPEDIADELMLLQDRVPPFDQQVAIKLIEEQLGARICDVFSRFDETPLASASVAQVHAACLKTGEEVVVKVVRPGLKPIIGQDLAWLFILARMAERVSADARLLHPVQVVMDYEKTIYDELDLLREAANSSQLRRNFEGSDLLYVPQVYWDWCRPKVLVMERIYGLQVTDMAGLADQRTDMKMLAERGVEIFFTQIFRDSFFHADMHPGNIFVSTVNPWAPKYIAIDCGIVGSLTPEDQDYLARNLFAFFKRDYRRVAQLHIDSGWVPAETKLNEFEAAIRTVCEPIFEKPLKDISFGQVLMRLFQTARRFNMEVQPQLVLLQKTLLNIEGLGRQLYPELDLWSTAQPYLERWMRERVSPKTLLGNLQSQVEQLPHIAGMTRDLLERMSRPHASDPPRPWHDRKDEPVLRLIGAALLVGGAIQGWVMSEAATQLLTLTAWPAAIMLIAGLYLIVRR.

The chain crosses the membrane as a helical span at residues Asp-23–Trp-43. The Protein kinase domain maps to Arg-125–Leu-492. Residues Leu-131–Val-139 and Lys-153 contribute to the ATP site. The Proton acceptor role is filled by Asp-288. The next 2 helical transmembrane spans lie at Leu-494–Ala-514 and Leu-517–Val-537.

The protein belongs to the ABC1 family. UbiB subfamily.

Its subcellular location is the cell inner membrane. It functions in the pathway cofactor biosynthesis; ubiquinone biosynthesis [regulation]. Functionally, is probably a protein kinase regulator of UbiI activity which is involved in aerobic coenzyme Q (ubiquinone) biosynthesis. In Pseudomonas syringae pv. tomato (strain ATCC BAA-871 / DC3000), this protein is Probable protein kinase UbiB.